Here is a 467-residue protein sequence, read N- to C-terminus: Asparagine--tRNA ligase (467 aa).

Belongs to the class-II aminoacyl-tRNA synthetase family. Homodimer.

The protein localises to the cytoplasm. The enzyme catalyses tRNA(Asn) + L-asparagine + ATP = L-asparaginyl-tRNA(Asn) + AMP + diphosphate + H(+). This is Asparagine--tRNA ligase from Legionella pneumophila (strain Paris).